The chain runs to 181 residues: ATP synthase subunit delta (181 aa).

The protein belongs to the ATPase delta chain family. F-type ATPases have 2 components, F(1) - the catalytic core - and F(0) - the membrane proton channel. F(1) has five subunits: alpha(3), beta(3), gamma(1), delta(1), epsilon(1). F(0) has three main subunits: a(1), b(2) and c(10-14). The alpha and beta chains form an alternating ring which encloses part of the gamma chain. F(1) is attached to F(0) by a central stalk formed by the gamma and epsilon chains, while a peripheral stalk is formed by the delta and b chains. The F(1)F(0) complex interacts with SpoIIIJ and YqjG; YqgA is found in the same complex. Interacts with FloT.

The protein resides in the cell membrane. The protein localises to the membrane raft. Its function is as follows. F(1)F(0) ATP synthase produces ATP from ADP in the presence of a proton or sodium gradient. F-type ATPases consist of two structural domains, F(1) containing the extramembraneous catalytic core and F(0) containing the membrane proton channel, linked together by a central stalk and a peripheral stalk. During catalysis, ATP synthesis in the catalytic domain of F(1) is coupled via a rotary mechanism of the central stalk subunits to proton translocation. Functionally, this protein is part of the stalk that links CF(0) to CF(1). It either transmits conformational changes from CF(0) to CF(1) or is implicated in proton conduction. The chain is ATP synthase subunit delta from Bacillus subtilis (strain 168).